The sequence spans 68 residues: DNA-directed RNA polymerase subunit omega (68 aa).

It belongs to the RNA polymerase subunit omega family. In terms of assembly, the RNAP catalytic core consists of 2 alpha, 1 beta, 1 beta' and 1 omega subunit. When a sigma factor is associated with the core the holoenzyme is formed, which can initiate transcription.

The enzyme catalyses RNA(n) + a ribonucleoside 5'-triphosphate = RNA(n+1) + diphosphate. Promotes RNA polymerase assembly. Latches the N- and C-terminal regions of the beta' subunit thereby facilitating its interaction with the beta and alpha subunits. The polypeptide is DNA-directed RNA polymerase subunit omega (Brevibacillus brevis (strain 47 / JCM 6285 / NBRC 100599)).